The chain runs to 620 residues: Chaperone protein HscA homolog (620 aa).

This sequence belongs to the heat shock protein 70 family.

In terms of biological role, chaperone involved in the maturation of iron-sulfur cluster-containing proteins. Has a low intrinsic ATPase activity which is markedly stimulated by HscB. The polypeptide is Chaperone protein HscA homolog (Pseudomonas savastanoi pv. phaseolicola (strain 1448A / Race 6) (Pseudomonas syringae pv. phaseolicola (strain 1448A / Race 6))).